The primary structure comprises 284 residues: Nucleotide-binding protein NMA0948 (284 aa).

8–15 (GLSGSGKS) lines the ATP pocket. 58 to 61 (DVRS) is a binding site for GTP.

The protein belongs to the RapZ-like family.

Its function is as follows. Displays ATPase and GTPase activities. In Neisseria meningitidis serogroup A / serotype 4A (strain DSM 15465 / Z2491), this protein is Nucleotide-binding protein NMA0948.